The sequence spans 202 residues: ATP-dependent Clp protease proteolytic subunit (202 aa).

Serine 106 (nucleophile) is an active-site residue. Histidine 131 is a catalytic residue.

The protein belongs to the peptidase S14 family. Fourteen ClpP subunits assemble into 2 heptameric rings which stack back to back to give a disk-like structure with a central cavity, resembling the structure of eukaryotic proteasomes.

The protein localises to the cytoplasm. It catalyses the reaction Hydrolysis of proteins to small peptides in the presence of ATP and magnesium. alpha-casein is the usual test substrate. In the absence of ATP, only oligopeptides shorter than five residues are hydrolyzed (such as succinyl-Leu-Tyr-|-NHMec, and Leu-Tyr-Leu-|-Tyr-Trp, in which cleavage of the -Tyr-|-Leu- and -Tyr-|-Trp bonds also occurs).. Its function is as follows. Cleaves peptides in various proteins in a process that requires ATP hydrolysis. Has a chymotrypsin-like activity. Plays a major role in the degradation of misfolded proteins. This is ATP-dependent Clp protease proteolytic subunit from Paracidovorax citrulli (strain AAC00-1) (Acidovorax citrulli).